Reading from the N-terminus, the 553-residue chain is Formate--tetrahydrofolate ligase 2 (553 aa).

63–70 (TSAGEGKS) lines the ATP pocket.

This sequence belongs to the formate--tetrahydrofolate ligase family.

The catalysed reaction is (6S)-5,6,7,8-tetrahydrofolate + formate + ATP = (6R)-10-formyltetrahydrofolate + ADP + phosphate. It participates in one-carbon metabolism; tetrahydrofolate interconversion. The protein is Formate--tetrahydrofolate ligase 2 of Lactobacillus acidophilus (strain ATCC 700396 / NCK56 / N2 / NCFM).